The chain runs to 780 residues: MSDGDKNGRDNHEEALVPVEVWQELERAECLARGAALKWASGVFCRPEHLEKLGQYKKRESQRTASIQSRLKSVVQSYLEGVDWGLGQLREARAELRGVSHDLYKANLESRKNSEEVTTLETLREISVSHCQLLAAVSNLPRLYKVRSMVLETERLVESRRLLEAHARLMELERWQDEVLLQLQGPRGSSGTELNSEDEELVRNYFSGVGRLVDALAKELWAVVGSGLSLAHQNPTPFVSAVRIVEREEALDQFFLEERRSTSGHNIPMPAGRPRNWRDRFFKVMEEAVSARFRSVSYLHTRGPGLASHLSALQHCIMGDLSTVRHCLEQCVPAHYHLTRAYLHFCHQFLQTHLGLVSGWELEGGEIFAVLNWVLHIYNSSEMMGEPALLAELEIENLGPLISQEGLEQLQNKYVQKVRKSVSEWMQKALEVELTDWQRDQEPDIDHEGYYHTSLPTIITQMLEENARVALMISEALRDQTIQMGLYEMEKLLSRFRDAVIEFGKEHRKDPTVNKFYLHYLLACINNCIILKTSTESLQQQICSFVSNRYSRIPLGPLAALDRAVRKACRLVMDHLLFELQPHLQELLSSTWLDQGDVTLNMCGVLERHCELYNRVRQPCRQRLKEECQWLTVVEYVRAVMQKRLVCRSSDEQKQLAQRMTQDAQQLRDHLQSMEIDGTIGEVNPTALIAALADIINLKDPGMLLLEISGLLSKYPDISEEHVSVLLDIRGDVPKEVRKSVLDFLDQSAPPLPPGYRPIFTEILVPSSSIPFCLPTAKCT.

It belongs to the SEC6 family.

The protein resides in the cytoplasmic vesicle. It is found in the secretory vesicle. Functionally, as part of the exocyst, may play a role in regulated exocytosis. The chain is Exocyst complex component 3-like protein (exoc3l1) from Danio rerio (Zebrafish).